The chain runs to 439 residues: Probable N-acetylmuramidase (439 aa).

The signal sequence occupies residues 1 to 57 (MPVSRIKVKNRHLKKKAKKPLAFYKPATKFAGAVLIAGTLTTTHELLLQQTSPMVQA). Disordered regions lie at residues 218–241 (SAGT…TSST) and 287–320 (SSSS…PASQ). The region spanning 241–284 (TTYTVKSGDTLWGISQKYGISVAQIQSANNLKSTVIYIGQKLVL) is the LysM 1 domain. A compositionally biased stretch (low complexity) spans 287 to 319 (SSSSSNTNSSTSSGNSAGTTTPTTSVTPAKPAS). Positions 321-364 (TTIKVKSGDTLWGLSVKYKTTIAQLKSWNHLNSDTIFIGQNLIV) constitute a LysM 2 domain. The interval 372 to 393 (SSSTGSSSASTSSTSNSSAASN) is disordered. Residues 395–438 (SIHKVVKGDTLWGLSQKSGSPIASIKAWNHLSSDTILIGQYLRI) enclose the LysM 3 domain.

Belongs to the glycosyl hydrolase 73 family.

Its subcellular location is the secreted. The enzyme catalyses Hydrolysis of (1-&gt;4)-beta-linkages between N-acetylmuramic acid and N-acetyl-D-glucosamine residues in a peptidoglycan and between N-acetyl-D-glucosamine residues in chitodextrins.. Functionally, required for cell separation during growth. The protein is Probable N-acetylmuramidase (acmA) of Lactococcus lactis subsp. lactis (strain IL1403) (Streptococcus lactis).